A 166-amino-acid polypeptide reads, in one-letter code: UPF0336 protein MT0525.1 (166 aa).

Positions 8–131 (QTLIGKHYRA…VLAEIRSEVT (124 aa)) constitute a MaoC-like domain.

It belongs to the UPF0336 family.

This is UPF0336 protein MT0525.1 from Mycobacterium tuberculosis (strain CDC 1551 / Oshkosh).